Reading from the N-terminus, the 404-residue chain is Multidrug resistance protein MdtH (404 aa).

The Cytoplasmic portion of the chain corresponds to 1–12 (MSRVSQARNLGK). Residues 13 to 33 (YFLLIDNMLVVLGFFVVFPLI) form a helical membrane-spanning segment. Topologically, residues 34–98 (SIRFVDQMGW…GFATMGIAHE (65 aa)) are periplasmic. A helical membrane pass occupies residues 99–116 (PWLLWFSCFLSGLGGTLF). The Cytoplasmic segment spans residues 117 to 138 (DPPRSALVVKLIRPEQRGRFFS). The helical transmembrane segment at 139 to 159 (LLMMQDSAGAVIGALLGSWLL) threads the bilayer. Residues 160–164 (QYDFR) lie on the Periplasmic side of the membrane. A helical membrane pass occupies residues 165 to 185 (LVCAMGAILFIVCAIFNAWLL). Residues 186–213 (PAWKLSTVRTPVREGMRRVISDKRFVTY) are Cytoplasmic-facing. The helical transmembrane segment at 214–234 (VLTLAGYYMLAVQVMLMLPIM) threads the bilayer. The Periplasmic segment spans residues 235-243 (VNDVAGSPA). Residues 244–264 (AVKWMYAIEACLSLTLLYPIA) form a helical membrane-spanning segment. Over 265-276 (RWSEKRFRLEHR) the chain is Cytoplasmic. A helical membrane pass occupies residues 277–297 (LMAGLLIMSLSMIPIGLAGNL). Topologically, residues 298-299 (QQ) are periplasmic. The helical transmembrane segment at 300-320 (LFTLICAFYIGSVIAEPARET) threads the bilayer. At 321–339 (LSASLTDARARGSYMGFSR) the chain is on the cytoplasmic side. The chain crosses the membrane as a helical span at residues 340–360 (LGLAIGGAIGYIGGGWLFDMG). Residues 361 to 367 (KTLAQPE) lie on the Periplasmic side of the membrane. A helical membrane pass occupies residues 368–388 (LPWMMLGIIGFITFLALGWQF). At 389-404 (SHKRTPRQYTGARRLI) the chain is on the cytoplasmic side.

The protein belongs to the major facilitator superfamily. DHA1 family. MdtH (TC 2.A.1.2.21) subfamily.

Its subcellular location is the cell inner membrane. The polypeptide is Multidrug resistance protein MdtH (Salmonella arizonae (strain ATCC BAA-731 / CDC346-86 / RSK2980)).